The following is a 174-amino-acid chain: UPF0316 protein lin1888 (174 aa).

3 helical membrane passes run 4–24 (GIFI…IYTV), 36–56 (LAAL…SLVL), and 62–82 (IANV…GMKI).

This sequence belongs to the UPF0316 family.

The protein localises to the cell membrane. The protein is UPF0316 protein lin1888 of Listeria innocua serovar 6a (strain ATCC BAA-680 / CLIP 11262).